Here is a 376-residue protein sequence, read N- to C-terminus: MENKVVEEKQVDKIPLMSPCKMGKFELCHRVVLAPLTRQRSYGYIPQPHAILHYSQRSTNGGLLIGEATVISETGIGYKDVPGIWTKEQVEAWKPIVDAVHAKGGIFFCQIWHVGRVSNKDFQPNGEDPISCTDRGLTPQIRSNGIDIAHFTRPRRLTTDEIPQIVNEFRVAARNAIEAGFDGVEIHGAHGYLIDQFMKDQVNDRSDKYGGSLENRCRFALEIVEAVANEIGSDRVGIRISPFAHYNEAGDTNPTALGLYMVESLNKYDLAYCHVVEPRMKTAWEKIECTESLVPMRKAYKGTFIVAGGYDREDGNRALIEDRADLVAYGRLFISNPDLPKRFELNAPLNKYNRDTFYTSDPIVGYTDYPFLETMT.

FMN is bound by residues 35-37 (PLT), A68, and Q110. Substrate is bound by residues S143 and 187–190 (HGAH). The active-site Proton donor is Y192. R239 contributes to the FMN binding site. R279 serves as a coordination point for substrate. FMN is bound by residues G309 and 330–331 (GR).

This sequence belongs to the NADH:flavin oxidoreductase/NADH oxidase family. FMN serves as cofactor. Constitutively expressed in roots, leaves, cotyledons, cells culture and to a lower extent in flowers.

It localises to the cytoplasm. The enzyme catalyses (1S,2S)-OPC-8 + NADP(+) = (9S,13S,15Z)-12-oxophyto-10,15-dienoate + NADPH + H(+). Its pathway is lipid metabolism; oxylipin biosynthesis. Its function is as follows. Specifically cleaves olefinic bonds in alpha,beta-unsaturated carbonyls and may be involved in detoxification or modification of these reactive compounds. May be involved in the biosynthesis or metabolism of oxylipin signaling molecules. In vitro, reduces 9R,13R-12-oxophyodienoic acid (9R,13R-OPDA) to 9R,13R-OPC-8:0, but not 9S,13S-OPDA, the natural precursor of jasmonic acid. Also reduces N-ethylmaleimide and maleic acid. In Solanum lycopersicum (Tomato), this protein is 12-oxophytodienoate reductase 1 (OPR1).